A 127-amino-acid polypeptide reads, in one-letter code: MLFYKPVMRMAVRPLKSIRFQSSYTSITKLTNLTEFRNLIKQNDKLVIDFYATWCGPCKMMQPHLTKLIQAYPDVRFVKCDVDESPDIAKECEVTAMPTFVLGKDGQLIGKIIGANPTALEKGIKDL.

A mitochondrion-targeting transit peptide spans 1–21; the sequence is MLFYKPVMRMAVRPLKSIRFQ. The region spanning 22–127 is the Thioredoxin domain; it reads SSYTSITKLT…TALEKGIKDL (106 aa). Residues cysteine 55 and cysteine 58 each act as nucleophile in the active site. Cysteine 55 and cysteine 58 are joined by a disulfide.

The protein belongs to the thioredoxin family.

Its subcellular location is the mitochondrion. The polypeptide is Thioredoxin-3, mitochondrial (TRX3) (Saccharomyces cerevisiae (strain ATCC 204508 / S288c) (Baker's yeast)).